We begin with the raw amino-acid sequence, 61 residues long: MARKALIVKQQKPQKYKTREYNRCKICGRPRAYLRKFGMCRLCFRKYAHQGMIPGVKKASW.

4 residues coordinate Zn(2+): Cys-24, Cys-27, Cys-40, and Cys-43.

It belongs to the universal ribosomal protein uS14 family. Zinc-binding uS14 subfamily. As to quaternary structure, part of the 30S ribosomal subunit. Contacts proteins S3 and S10. The cofactor is Zn(2+).

In terms of biological role, binds 16S rRNA, required for the assembly of 30S particles and may also be responsible for determining the conformation of the 16S rRNA at the A site. In Caldanaerobacter subterraneus subsp. tengcongensis (strain DSM 15242 / JCM 11007 / NBRC 100824 / MB4) (Thermoanaerobacter tengcongensis), this protein is Small ribosomal subunit protein uS14.